A 736-amino-acid polypeptide reads, in one-letter code: MATANSIIVLDDDDENEAAAQPGPSHPLPSTASPEAEAPSSSEPHGARGSSSSGGKKCYKLENEKLFQEFLELCKTQTADHPEVVPFLCNRQQRAHSLFLASAEFCNILSRVLSRAQSRPFKLYVYINELCTVLKGHSAKKKLNLAPVATTSNEPSGNNPPTHLSLDPTNAENTASQAPRTRGSRRQIQRLEQLLALYVAEIRRLQERELDLSELDDPDSTYLQEARLKRKLIRLFGRLCELKDCSSLTGRVIKQRIPYRGTRYPKVNRRIERLINKPGPDTFPDYGDVLRAVKKAAARHSLGLPRQQLQLMAQDAFRNVGIRLQEQRHLDLIYNFGCHLTNDYRPGVDPALSYPVLARRLRENRILALIRLDQVISFYAMLQDGGEEGKKKKRRARLHGPSSHSANPPEPSLDSGEGPIGMASQGCPSASRAETDDEDDEESDEEEEEEEEEEEEEATDFEEEEDLEQMQEGQEDDEEEEEEEEAAGKDGDGSPMSSPQISTEKNLEPGKQISRSSGEQQNKVSPLLLSEEPLAPSSIDAESNGEQPEELTLEEESPVSQLFELEIEALPLDTPSFVEMDISFFRKQSEEPFTTVLENGAGMVSSTSFNGGVSPHNWGDSGPPCKKSRKEKKQTGSGPLGNSYVERQRSVHEKNGKKICTLPSPPSPLASLAPVADSSTRVDSPSHGLVTSSLCNPSPAQLSQTPQSQPPRPSTYKTSVATQCDPEEIIVLSDSD.

Positions 1–55 (MATANSIIVLDDDDENEAAAQPGPSHPLPSTASPEAEAPSSSEPHGARGSSSSGG) are disordered. The tract at residues 1–160 (MATANSIIVL…TSNEPSGNNP (160 aa)) is necessary for interaction with USP7 and ATRX. Ser25 is modified (phosphoserine). Residues 28–55 (LPSTASPEAEAPSSSEPHGARGSSSSGG) are compositionally biased toward low complexity. Lys142 is covalently cross-linked (Glycyl lysine isopeptide (Lys-Gly) (interchain with G-Cter in SUMO2)). Residues 148-185 (VATTSNEPSGNNPPTHLSLDPTNAENTASQAPRTRGSR) are disordered. The segment covering 149–179 (ATTSNEPSGNNPPTHLSLDPTNAENTASQAP) has biased composition (polar residues). Residues 180–216 (RTRGSRRQIQRLEQLLALYVAEIRRLQERELDLSELD) adopt a coiled-coil conformation. Residues 183–417 (GSRRQIQRLE…PPEPSLDSGE (235 aa)) are interaction with histone H3.3. Position 213 is a phosphoserine (Ser213). The tract at residues 347-566 (GVDPALSYPV…SPVSQLFELE (220 aa)) is necessary for interaction with USP7. The segment at 387-558 (EEGKKKKRRA…EELTLEEESP (172 aa)) is disordered. Residues 391–395 (KKKRR) carry the Nuclear localization signal motif. 2 positions are modified to phosphoserine: Ser412 and Ser424. Positions 430-490 (ASRAETDDED…EEEEEAAGKD (61 aa)) form a coiled coil. Residues 435 to 485 (TDDEDDEESDEEEEEEEEEEEEEATDFEEEEDLEQMQEGQEDDEEEEEEEE) show a composition bias toward acidic residues. Phosphothreonine is present on Thr459. Phosphoserine is present on residues Ser494 and Ser497. A compositionally biased stretch (polar residues) spans 495–504 (PMSSPQISTE). Residue Lys511 is modified to N6-acetyllysine. Over residues 513 to 524 (ISRSSGEQQNKV) the composition is skewed to polar residues. The segment covering 525–538 (SPLLLSEEPLAPSS) has biased composition (low complexity). A compositionally biased stretch (acidic residues) spans 547–557 (QPEELTLEEES). Phosphoserine is present on residues Ser557 and Ser576. The interval 602–736 (GMVSSTSFNG…EEIIVLSDSD (135 aa)) is disordered. Residues 622-736 (GPPCKKSRKE…EEIIVLSDSD (115 aa)) form an interaction with SPOP region. Positions 624-630 (PCKKSRK) match the Nuclear localization signal motif. Glycyl lysine isopeptide (Lys-Gly) (interchain with G-Cter in SUMO1) cross-links involve residues Lys626 and Lys627. A compositionally biased stretch (basic and acidic residues) spans 646–656 (ERQRSVHEKNG). Phosphoserine is present on residues Ser664 and Ser667. Residues 669–679 (LASLAPVADSS) are compositionally biased toward low complexity. Phosphoserine occurs at positions 684, 698, 733, and 735. A compositionally biased stretch (low complexity) spans 697–707 (PSPAQLSQTPQ). Residues 729 to 736 (IIVLSDSD) form a sumo interaction motif (SIM) region.

The protein belongs to the DAXX family. In terms of assembly, homomultimer. Interacts (via C-terminus) with TNFRSF6 (via death domain). Interacts with PAX5, SLC2A4/GLUT4, MAP3K5, TGFBR2, phosphorylated dimeric HSPB1/HSP27, CENPC, ETS1, sumoylated PML, UBE2I, MCRS1 and TP53. Interacts (via N-terminus) with HIPK2 and HIPK3. Interacts with HIPK1, which induces translocation from PML/POD/ND10 nuclear bodies to chromatin and enhances association with HDAC1. Interacts (non-phosphorylated) with PAX3, PAX7, DEK, HDAC1, HDAC2, HDAC3, acetylated histone H4 and histones H2A, H2B, H3, H3.3 and H4. Interacts with SPOP; mediating CUL3-dependent proteasomal degradation. Interacts with CBP; the interaction is dependent the sumoylation of CBP and suppresses CBP transcriptional activity via recruitment of HDAC2 directly in the complex with TP53 and HIPK2. Interacts with AXIN1; the interaction stimulates the interaction of DAXX with TP53, stimulates 'Ser-46' phosphorylation of TP53 on and induces cell death on UV irradiation. Interacts with MDM2; the interaction is direct. Interacts with USP7; the interaction is direct and independent of MDM2 and TP53. Part of a complex with DAXX, MDM2 and USP7 under non-stress conditions. Interacts (via N-terminus) with RASSF1 (via C-terminus); the interaction is independent of MDM2 and TP53; RASSF1 isoform A disrupts interactions among MDM2, DAXX and USP7, thus contributing to the efficient activation of TP53 by promoting MDM2 self-ubiquitination in cell-cycle checkpoint control in response to DNA damage. Interacts with ATRX to form the chromatin remodeling complex ATRX:DAXX. Post-translationally, sumoylated with SUMO1 on multiple lysine residues. Polyubiquitinated; which is promoted by CUL3 and SPOP and results in proteasomal degradation. Ubiquitinated by MDM2; inducing its degradation. Deubiquitinated by USP7; leading to stabilize it.

The protein localises to the cytoplasm. It localises to the nucleus. The protein resides in the nucleoplasm. Its subcellular location is the PML body. It is found in the nucleolus. The protein localises to the chromosome. It localises to the centromere. In terms of biological role, transcription corepressor known to repress transcriptional potential of several sumoylated transcription factors. Down-regulates basal and activated transcription. Its transcription repressor activity is modulated by recruiting it to subnuclear compartments like the nucleolus or PML/POD/ND10 nuclear bodies through interactions with MCSR1 and PML, respectively. Seems to regulate transcription in PML/POD/ND10 nuclear bodies together with PML and may influence TNFRSF6-dependent apoptosis thereby. Inhibits transcriptional activation of PAX3 and ETS1 through direct protein-protein interactions. Modulates PAX5 activity; the function seems to involve CREBBP. Acts as an adapter protein in a MDM2-DAXX-USP7 complex by regulating the RING-finger E3 ligase MDM2 ubiquitination activity. Under non-stress condition, in association with the deubiquitinating USP7, prevents MDM2 self-ubiquitination and enhances the intrinsic E3 ligase activity of MDM2 towards TP53, thereby promoting TP53 ubiquitination and subsequent proteasomal degradation. Upon DNA damage, its association with MDM2 and USP7 is disrupted, resulting in increased MDM2 autoubiquitination and consequently, MDM2 degradation, which leads to TP53 stabilization. Acts as a histone chaperone that facilitates deposition of histone H3.3. Acts as a targeting component of the chromatin remodeling complex ATRX:DAXX which has ATP-dependent DNA translocase activity and catalyzes the replication-independent deposition of histone H3.3 in pericentric DNA repeats outside S-phase and telomeres, and the in vitro remodeling of H3.3-containing nucleosomes. Does not affect the ATPase activity of ATRX but alleviates its transcription repression activity. Upon neuronal activation associates with regulatory elements of selected immediate early genes where it promotes deposition of histone H3.3 which may be linked to transcriptional induction of these genes. Required for the recruitment of histone H3.3:H4 dimers to PML-nuclear bodies (PML-NBs); the process is independent of ATRX and facilitated by ASF1A; PML-NBs are suggested to function as regulatory sites for the incorporation of newly synthesized histone H3.3 into chromatin. Proposed to mediate activation of the JNK pathway and apoptosis via MAP3K5 in response to signaling from TNFRSF6 and TGFBR2. Interaction with HSPB1/HSP27 may prevent interaction with TNFRSF6 and MAP3K5 and block DAXX-mediated apoptosis. In contrast, in lymphoid cells JNC activation and TNFRSF6-mediated apoptosis may not involve DAXX. The sequence is that of Death domain-associated protein 6 (DAXX) from Chlorocebus aethiops (Green monkey).